The primary structure comprises 262 residues: Ribosomal RNA small subunit methyltransferase A (262 aa).

S-adenosyl-L-methionine-binding residues include histidine 13, leucine 15, glycine 40, glutamate 61, aspartate 85, and asparagine 103.

This sequence belongs to the class I-like SAM-binding methyltransferase superfamily. rRNA adenine N(6)-methyltransferase family. RsmA subfamily.

It is found in the cytoplasm. The catalysed reaction is adenosine(1518)/adenosine(1519) in 16S rRNA + 4 S-adenosyl-L-methionine = N(6)-dimethyladenosine(1518)/N(6)-dimethyladenosine(1519) in 16S rRNA + 4 S-adenosyl-L-homocysteine + 4 H(+). Functionally, specifically dimethylates two adjacent adenosines (A1518 and A1519) in the loop of a conserved hairpin near the 3'-end of 16S rRNA in the 30S particle. May play a critical role in biogenesis of 30S subunits. This is Ribosomal RNA small subunit methyltransferase A from Bordetella avium (strain 197N).